The chain runs to 326 residues: tRNA-modifying protein YgfZ (326 aa).

Residues tryptophan 27 and tryptophan 189 each contribute to the folate site.

Belongs to the tRNA-modifying YgfZ family.

The protein localises to the cytoplasm. Its function is as follows. Folate-binding protein involved in regulating the level of ATP-DnaA and in the modification of some tRNAs. It is probably a key factor in regulatory networks that act via tRNA modification, such as initiation of chromosomal replication. The sequence is that of tRNA-modifying protein YgfZ from Escherichia coli (strain SMS-3-5 / SECEC).